Reading from the N-terminus, the 221-residue chain is Epididymal secretory glutathione peroxidase (221 aa).

Residues 1 to 21 form the signal peptide; that stretch reads MVTELRVFYLVPLLLASYVQT. Residue cysteine 73 is part of the active site.

Belongs to the glutathione peroxidase family. In terms of tissue distribution, epididymis.

It is found in the secreted. The enzyme catalyses 2 glutathione + H2O2 = glutathione disulfide + 2 H2O. Its function is as follows. Protects cells and enzymes from oxidative damage, by catalyzing the reduction of hydrogen peroxide, lipid peroxides and organic hydroperoxide, by glutathione. May constitute a glutathione peroxidase-like protective system against peroxide damage in sperm membrane lipids. This chain is Epididymal secretory glutathione peroxidase (Gpx5), found in Mus musculus (Mouse).